Reading from the N-terminus, the 626-residue chain is Extracellular metalloproteinase 1 (626 aa).

The N-terminal stretch at 1 to 17 (MLSSLLAGAGLVALAAS) is a signal peptide. The propeptide occupies 18–241 (HPTSHGNALT…IHGVVDYSAD (224 aa)). N315 is a glycosylation site (N-linked (GlcNAc...) asparagine). H425 contacts Zn(2+). Residue E426 is part of the active site. Residue H429 coordinates Zn(2+). Positions 606 to 626 (GSGARYSSTARTGSTALPSGC) are disordered. A compositionally biased stretch (polar residues) spans 610-626 (RYSSTARTGSTALPSGC).

Belongs to the peptidase M36 family. It depends on Zn(2+) as a cofactor.

It localises to the secreted. Functionally, secreted metalloproteinase that allows assimilation of proteinaceous substrates. The chain is Extracellular metalloproteinase 1 (MEP1) from Phaeosphaeria nodorum (strain SN15 / ATCC MYA-4574 / FGSC 10173) (Glume blotch fungus).